Here is a 419-residue protein sequence, read N- to C-terminus: Peroxisome biogenesis factor 10 (419 aa).

The Peroxisomal matrix portion of the chain corresponds to Met-1–Asn-27. The chain crosses the membrane as a helical span at residues Ala-28–Lys-57. A topological domain (cytoplasmic) is located at residue Gly-58. A helical transmembrane segment spans residues Gln-59–Leu-80. The Peroxisomal matrix segment spans residues Thr-81 to Arg-108. A helical transmembrane segment spans residues Tyr-109–Asp-141. At Glu-142–Ile-158 the chain is on the cytoplasmic side. A helical membrane pass occupies residues Glu-159–Ser-185. Over Gly-186–Asn-215 the chain is Peroxisomal matrix. Residues Tyr-216–Phe-235 form a helical membrane-spanning segment. The Cytoplasmic segment spans residues Lys-236–Phe-419. The Zn(2+) site is built by Cys-298, Cys-301, Cys-313, His-315, Cys-318, Cys-321, Cys-334, and Cys-347. An RING-type zinc finger spans residues Cys-298–Cys-360.

This sequence belongs to the pex2/pex10/pex12 family. Component of the peroxisomal translocation complex, composed of at least PEX3, PEX2, PEX10 and PEX12. Interacts with PEX19.

The protein resides in the peroxisome membrane. It catalyses the reaction S-ubiquitinyl-[E2 ubiquitin-conjugating enzyme]-L-cysteine + [acceptor protein]-L-lysine = [E2 ubiquitin-conjugating enzyme]-L-cysteine + N(6)-ubiquitinyl-[acceptor protein]-L-lysine.. It functions in the pathway protein modification; protein ubiquitination. Its activity is regulated as follows. The E3 ubiquitin-protein ligase activity is stimulated by PEX12. In terms of biological role, E3 ubiquitin-protein ligase component of the peroxisomal translocation complex. The two types of peroxisomal matrix targeting signals, PTS1 and PTS2, are first recognized in the cytosol by their receptors PEX5 and PEX7, respectively, which then carry the cargo to the peroxisomal membrane. The peroxisomal targeting signal (PTS) receptor-cargo complexes interact with peroxisomal membrane protein (PMP) components of the docking complex. They have then additional downstream interactions with the translocation complex, leading to the transport of fully folded and oligomerized cargo into the peroxisome matrix. The peroxisomal translocation complex forms the retrotranslocation channel with each subunit contributing transmembrane segments that coassemble into an open channel that specifically allows the passage of PEX5 and PEX20 through the peroxisomal membrane. Specifically catalyzes monoubiquitination of PEX5 and/or PEX20 at 'Cys-6' and 'Cys-8', respectively, a modification that acts as a signal for PEX5 or PEX20 export from peroxisomes to the cytosol, thereby promoting PEX5 and PEX20 recycling. The chain is Peroxisome biogenesis factor 10 from Komagataella pastoris (Yeast).